Here is a 906-residue protein sequence, read N- to C-terminus: Formin-like protein 16 (906 aa).

The N-terminal stretch at 1 to 28 is a signal peptide; the sequence is MAPAPSPTPLPLFLLLLLLVGVAPLAAA. The tract at residues 34 to 76 is disordered; the sequence is QTRFPSTRTPAFATPPPITSPSPSPGTPTATPSSSPPSSSGKR. Over residues 46–59 the composition is skewed to pro residues; the sequence is ATPPPITSPSPSPG. The span at 60 to 73 shows a compositional bias: low complexity; sequence TPTATPSSSPPSSS. The chain crosses the membrane as a helical span at residues 81-101; the sequence is VAVVSTALSSFAVSGLAFFLF. 6 disordered regions span residues 113 to 149, 161 to 223, 250 to 404, 451 to 474, 677 to 702, and 834 to 906; these read AGGA…VDEN, KEGD…SLDS, AYAR…DQQA, RKTK…GRSN, GSLA…REER, and LQQQ…SDEE. Gly residues predominate over residues 114–128; the sequence is GGAGQHYGGAQGGAL. Residues 174–185 are compositionally biased toward pro residues; the sequence is SRRPPQPPPPRP. Residues 186–196 are compositionally biased toward basic and acidic residues; sequence YRAERRQDAHE. The span at 270 to 294 shows a compositional bias: pro residues; the sequence is SPSPAPAPAARPASPSPSLPLPPGR. Residues 295–310 show a composition bias toward low complexity; it reads ESPSRPQSIAAAAVAS. The span at 311–383 shows a compositional bias: pro residues; it reads PAPPPPPPPK…KGGPPPPPPK (73 aa). An FH2 domain is found at 396 to 849; sequence PTGSADQQAK…PTPPPSSSQP (454 aa). 2 stretches are compositionally biased toward polar residues: residues 463-474 and 677-697; these read GGSTSAGLGRSN and GSLA…SQGP. Low complexity predominate over residues 847-866; that stretch reads SQPAAPAATTKGAADDAPAP.

The protein belongs to the formin-like family. Class-I subfamily.

The protein resides in the membrane. This is Formin-like protein 16 (FH16) from Oryza sativa subsp. japonica (Rice).